A 235-amino-acid chain; its full sequence is Demethylmenaquinone methyltransferase (235 aa).

S-adenosyl-L-methionine is bound by residues threonine 58, aspartate 79, and 106–107; that span reads NA.

Belongs to the class I-like SAM-binding methyltransferase superfamily. MenG/UbiE family.

It catalyses the reaction a 2-demethylmenaquinol + S-adenosyl-L-methionine = a menaquinol + S-adenosyl-L-homocysteine + H(+). It participates in quinol/quinone metabolism; menaquinone biosynthesis; menaquinol from 1,4-dihydroxy-2-naphthoate: step 2/2. Its function is as follows. Methyltransferase required for the conversion of demethylmenaquinol (DMKH2) to menaquinol (MKH2). This is Demethylmenaquinone methyltransferase from Shouchella clausii (strain KSM-K16) (Alkalihalobacillus clausii).